Reading from the N-terminus, the 239-residue chain is Small ribosomal subunit protein eS6B (239 aa).

3 positions are modified to phosphoserine: Ser148, Ser235, and Ser236.

This sequence belongs to the eukaryotic ribosomal protein eS6 family. In terms of assembly, component of the small ribosomal subunit (SSU). Mature yeast ribosomes consist of a small (40S) and a large (60S) subunit. The 40S small subunit contains 1 molecule of ribosomal RNA (18S rRNA) and at least 33 different proteins. The large 60S subunit contains 3 rRNA molecules (25S, 5.8S and 5S rRNA) and at least 46 different proteins. Interacts with snoRNA U3. uS11 interacts with MPP10. Component of the ribosomal small subunit (SSU) processome composed of at least 40 protein subunits and snoRNA U3.

The protein resides in the cytoplasm. Its function is as follows. Component of the ribosome, a large ribonucleoprotein complex responsible for the synthesis of proteins in the cell. The small ribosomal subunit (SSU) binds messenger RNAs (mRNAs) and translates the encoded message by selecting cognate aminoacyl-transfer RNA (tRNA) molecules. The large subunit (LSU) contains the ribosomal catalytic site termed the peptidyl transferase center (PTC), which catalyzes the formation of peptide bonds, thereby polymerizing the amino acids delivered by tRNAs into a polypeptide chain. The nascent polypeptides leave the ribosome through a tunnel in the LSU and interact with protein factors that function in enzymatic processing, targeting, and the membrane insertion of nascent chains at the exit of the ribosomal tunnel. eS6 is involved in nucleolar processing of pre-18S ribosomal RNA and ribosome assembly. This is Small ribosomal subunit protein eS6B (rps602) from Schizosaccharomyces pombe (strain 972 / ATCC 24843) (Fission yeast).